The following is a 534-amino-acid chain: MEFISFVYTLIAFSSLLYFYLIWSESAKPKTTTHKAPPEASGAWPVIGHLRIMSGHPSAGIPHVNLGMLADKHGPIFSIRLGVHRVVVVSSPEVIKELFTTNDVAVSSRPSVKAGKHLAYDNAMLGFASYGAYWRQLRKIVSLELLSNRRLELQSHVSMSETGQFVKELYKLWEKKKSDGSGTEVGEGVVVDMKRWLGELNMNVVMRMVAGKRFGSGDNAEETKRCRRVMGDFFYLAGFFVPADALPYLGWLDLGGHEKRMKKAAKELDEVVGEWLAEHREREFSGEGKAQDFMDVMISVVKGADLQCEFDVDTIIKATCGTLIAGGTDTTAVVFVWALSLLLNHSHVLKKAQQELDKHVGKDRRVKESDLNNLIYLQAIVKETLRLYPPGPLAGTRRFTEDCVVGGYYIPKDTWLIVNLWKLQRDPRVWSDPLEFRPERFLAGDKTFDVKGQDFELIPFGAGRRICPGLSFGLQMLHLVLASLLQAFDMSTVSDEAVDMSESAGLTNMKATPLDVVVTPRLPPRLYNEIVEIY.

Residues 3 to 23 (FISFVYTLIAFSSLLYFYLIW) traverse the membrane as a helical segment. Cys467 serves as a coordination point for heme.

It belongs to the cytochrome P450 family. It depends on heme as a cofactor. In terms of tissue distribution, expressed in leaves.

It localises to the membrane. The enzyme catalyses genkwanin + reduced [NADPH--hemoprotein reductase] + O2 = scutellarein 7-methyl ether + oxidized [NADPH--hemoprotein reductase] + H2O. It catalyses the reaction (2S)-sakuranetin + reduced [NADPH--hemoprotein reductase] + O2 = (2S)-7-methylcarthamidin + oxidized [NADPH--hemoprotein reductase] + H2O + H(+). The catalysed reaction is apigenin 4',7-dimethyl ether + reduced [NADPH--hemoprotein reductase] + O2 = ladanein + oxidized [NADPH--hemoprotein reductase] + H2O + H(+). It carries out the reaction (2S)-naringenin 4',7-dimethyl ether + reduced [NADPH--hemoprotein reductase] + O2 = (2S)-carthamidin-4',7-dimethyl ether + oxidized [NADPH--hemoprotein reductase] + H2O + H(+). It functions in the pathway flavonoid metabolism. Its function is as follows. Hydroxylase involved in the biosynthesis of polymethoxylated flavonoids natural products such as nevadensin and salvigenin, aroma compounds which contribute to the flavor of sweet basil, and exhibit pharmacological activities such as anti-allergic, anti-oxidant, antibacterial, anti-proliferative, and anti-inflammatory effects. Catalyzes the 6-hydroxylation of 7-O-methylated precursors such as the conversion of genkwanin (GENK) to scutellarein-7-methyl ether (SCU7Me). Can also use, with a lower efficiency, apigenin-7,4'-dimethyl ether (AdM), naringenin-7-methyl ether (SAK) and naringenin-7,4'-dimethyl ether (NdM) as substrates. The chain is Flavonoid-6-hydroxylase from Ocimum basilicum (Sweet basil).